The following is a 129-amino-acid chain: MIFDFPKKFRFADSHEYACPEGDLVRIGISAFAVDQLGDIVFVDLPGIGTLLEQGISFGSVESVKAVEDMNAPIGGEVLQINESVLNSPEELQNDPHGEGWLLLVKPSDASQLDKLMSSEIYSEKVSSK.

One can recognise a Lipoyl-binding domain in the interval 24-106; sequence LVRIGISAFA…HGEGWLLLVK (83 aa). At Lys65 the chain carries N6-lipoyllysine.

It belongs to the GcvH family. As to quaternary structure, the glycine cleavage system is composed of four proteins: P, T, L and H. (R)-lipoate is required as a cofactor.

In terms of biological role, the glycine cleavage system catalyzes the degradation of glycine. The H protein shuttles the methylamine group of glycine from the P protein to the T protein. The protein is Glycine cleavage system H protein of Prochlorococcus marinus (strain SARG / CCMP1375 / SS120).